The following is a 331-amino-acid chain: PIN2/TERF1-interacting telomerase inhibitor 1 (331 aa).

3 disordered regions span residues 1 to 28 (MSML…DDSK), 156 to 175 (AQDG…LTTT), and 197 to 331 (SKSQ…KVSR). Positions 26 to 72 (DSKFGQKMLEKMGWSKGKGLGAQEQGATEHIKVKVKNNHLGLGATNN) constitute a G-patch domain. The residue at position 233 (serine 233) is a Phosphoserine. A compositionally biased stretch (basic residues) spans 236–246 (HKAKRHKKKKR). Basic and acidic residues predominate over residues 247 to 261 (VEAERGPAAKKRDQV). The segment at 254-328 (AAKKRDQVEL…DSAPVKKKKK (75 aa)) is telomerase inhibitory domain (TID). Serine 269, serine 274, and serine 277 each carry phosphoserine. The short motif at 291-301 (QDDVPKPRKRR) is the TBM element. The segment covering 297-306 (PRKRRAKKTL) has biased composition (basic residues).

Belongs to the PINX1 family. Interacts with MCRS1, TERT, TERF1, NCL/nucleolin, and the telomerase RNA.

It is found in the nucleus. The protein localises to the nucleolus. The protein resides in the chromosome. It localises to the telomere. Its subcellular location is the centromere. It is found in the kinetochore. In terms of biological role, microtubule-binding protein essential for faithful chromosome segregation. Mediates TRF1 and TERT accumulation in nucleolus and enhances TRF1 binding to telomeres. Inhibits telomerase activity. May inhibit cell proliferation and act as tumor suppressor. The polypeptide is PIN2/TERF1-interacting telomerase inhibitor 1 (Rattus norvegicus (Rat)).